A 429-amino-acid polypeptide reads, in one-letter code: Adenosylmethionine-8-amino-7-oxononanoate aminotransferase (429 aa).

Trp-52 is a binding site for substrate. Residue 112–113 (GS) coordinates pyridoxal 5'-phosphate. A substrate-binding site is contributed by Tyr-144. Asp-245 contributes to the pyridoxal 5'-phosphate binding site. The substrate site is built by Lys-274 and Gly-307. An N6-(pyridoxal phosphate)lysine modification is found at Lys-274. 308–309 (PT) lines the pyridoxal 5'-phosphate pocket. Arg-391 serves as a coordination point for substrate.

The protein belongs to the class-III pyridoxal-phosphate-dependent aminotransferase family. BioA subfamily. Homodimer. The cofactor is pyridoxal 5'-phosphate.

The protein localises to the cytoplasm. The catalysed reaction is (8S)-8-amino-7-oxononanoate + S-adenosyl-L-methionine = S-adenosyl-4-methylsulfanyl-2-oxobutanoate + (7R,8S)-7,8-diammoniononanoate. Its pathway is cofactor biosynthesis; biotin biosynthesis; 7,8-diaminononanoate from 8-amino-7-oxononanoate (SAM route): step 1/1. In terms of biological role, catalyzes the transfer of the alpha-amino group from S-adenosyl-L-methionine (SAM) to 7-keto-8-aminopelargonic acid (KAPA) to form 7,8-diaminopelargonic acid (DAPA). It is the only aminotransferase known to utilize SAM as an amino donor. This chain is Adenosylmethionine-8-amino-7-oxononanoate aminotransferase, found in Buchnera aphidicola subsp. Baizongia pistaciae (strain Bp).